The sequence spans 317 residues: Acetylglutamate kinase (317 aa).

Substrate contacts are provided by residues Gly70 to Gly71, Arg92, and Asn191.

The protein belongs to the acetylglutamate kinase family. ArgB subfamily.

It is found in the cytoplasm. The catalysed reaction is N-acetyl-L-glutamate + ATP = N-acetyl-L-glutamyl 5-phosphate + ADP. It functions in the pathway amino-acid biosynthesis; L-arginine biosynthesis; N(2)-acetyl-L-ornithine from L-glutamate: step 2/4. Catalyzes the ATP-dependent phosphorylation of N-acetyl-L-glutamate. The protein is Acetylglutamate kinase of Corynebacterium glutamicum (strain R).